The primary structure comprises 406 residues: tRNA-specific 2-thiouridylase MnmA (406 aa).

Residues 42 to 49 (GLSGGVDS) and leucine 68 contribute to the ATP site. The active-site Nucleophile is the cysteine 129. Cysteine 129 and cysteine 237 are disulfide-bonded. Glycine 154 serves as a coordination point for ATP. Residues 187–189 (KDQ) are interaction with tRNA. The Cysteine persulfide intermediate role is filled by cysteine 237. An interaction with tRNA region spans residues 342-343 (RY).

Belongs to the MnmA/TRMU family.

The protein localises to the cytoplasm. The enzyme catalyses S-sulfanyl-L-cysteinyl-[protein] + uridine(34) in tRNA + AH2 + ATP = 2-thiouridine(34) in tRNA + L-cysteinyl-[protein] + A + AMP + diphosphate + H(+). In terms of biological role, catalyzes the 2-thiolation of uridine at the wobble position (U34) of tRNA, leading to the formation of s(2)U34. The sequence is that of tRNA-specific 2-thiouridylase MnmA from Prochlorococcus marinus (strain MIT 9211).